The primary structure comprises 97 residues: Large ribosomal subunit protein eL21 (97 aa).

Belongs to the eukaryotic ribosomal protein eL21 family.

The sequence is that of Large ribosomal subunit protein eL21 from Methanococcus aeolicus (strain ATCC BAA-1280 / DSM 17508 / OCM 812 / Nankai-3).